Here is a 546-residue protein sequence, read N- to C-terminus: ATP synthase subunit alpha (546 aa).

172–179 (GDRKTGKT) lines the ATP pocket.

It belongs to the ATPase alpha/beta chains family. In terms of assembly, F-type ATPases have 2 components, CF(1) - the catalytic core - and CF(0) - the membrane proton channel. CF(1) has five subunits: alpha(3), beta(3), gamma(1), delta(1), epsilon(1). CF(0) has three main subunits: a(1), b(2) and c(9-12). The alpha and beta chains form an alternating ring which encloses part of the gamma chain. CF(1) is attached to CF(0) by a central stalk formed by the gamma and epsilon chains, while a peripheral stalk is formed by the delta and b chains.

Its subcellular location is the cell membrane. The catalysed reaction is ATP + H2O + 4 H(+)(in) = ADP + phosphate + 5 H(+)(out). Its function is as follows. Produces ATP from ADP in the presence of a proton gradient across the membrane. The alpha chain is a regulatory subunit. The polypeptide is ATP synthase subunit alpha (Corynebacterium efficiens (strain DSM 44549 / YS-314 / AJ 12310 / JCM 11189 / NBRC 100395)).